We begin with the raw amino-acid sequence, 423 residues long: Histidine--tRNA ligase (423 aa).

It belongs to the class-II aminoacyl-tRNA synthetase family.

It is found in the cytoplasm. The catalysed reaction is tRNA(His) + L-histidine + ATP = L-histidyl-tRNA(His) + AMP + diphosphate + H(+). This Picrophilus torridus (strain ATCC 700027 / DSM 9790 / JCM 10055 / NBRC 100828 / KAW 2/3) protein is Histidine--tRNA ligase.